We begin with the raw amino-acid sequence, 443 residues long: Thymidine phosphorylase (443 aa).

The protein belongs to the thymidine/pyrimidine-nucleoside phosphorylase family. In terms of assembly, homodimer.

The catalysed reaction is thymidine + phosphate = 2-deoxy-alpha-D-ribose 1-phosphate + thymine. The protein operates within pyrimidine metabolism; dTMP biosynthesis via salvage pathway; dTMP from thymine: step 1/2. Functionally, the enzymes which catalyze the reversible phosphorolysis of pyrimidine nucleosides are involved in the degradation of these compounds and in their utilization as carbon and energy sources, or in the rescue of pyrimidine bases for nucleotide synthesis. The polypeptide is Thymidine phosphorylase (Shewanella baltica (strain OS195)).